Reading from the N-terminus, the 1267-residue chain is RNA-directed RNA polymerase lambda-3 (1267 aa).

A RdRp catalytic domain is found at 555–792 (LSPTSGSAVI…KLYFIFGCRI (238 aa)).

The protein belongs to the reoviridae RNA-directed RNA polymerase family.

The protein localises to the virion. It catalyses the reaction RNA(n) + a ribonucleoside 5'-triphosphate = RNA(n+1) + diphosphate. RNA-directed RNA polymerase that is involved in transcription and genome replication. Following infection, it catalyzes the synthesis of fully conservative plus strands. After core assembly, which consists in recruitment of one capped plus-strand for each genomic segments and polymerase complexes, the polymerase switches mode and catalyzes the synthesis of complementary minus-strands. The chain is RNA-directed RNA polymerase lambda-3 (L1) from Reovirus type 3 (strain Dearing) (T3D).